A 155-amino-acid chain; its full sequence is Large ribosomal subunit protein uL22c (155 aa).

This sequence belongs to the universal ribosomal protein uL22 family. Part of the 50S ribosomal subunit.

The protein resides in the plastid. It is found in the chloroplast. This protein binds specifically to 23S rRNA. In terms of biological role, the globular domain of the protein is located near the polypeptide exit tunnel on the outside of the subunit, while an extended beta-hairpin is found that lines the wall of the exit tunnel in the center of the 70S ribosome. This Nicotiana tomentosiformis (Tobacco) protein is Large ribosomal subunit protein uL22c (rpl22).